We begin with the raw amino-acid sequence, 410 residues long: Regulator of microtubule dynamics protein 2 (410 aa).

Residues 9–28 form a helical membrane-spanning segment; the sequence is LILGIMAGTAGISLLAFWYH. Ser-51 carries the phosphoserine modification. The stretch at 69-110 forms a coiled coil; that stretch reads QRRQLQILEKLNELLTNMEELKEEIRFLKETIPKLEECIQDE. The interval 120-151 is disordered; sequence ISPQHRARKKKGTTVQRSATSNSSEEAESEGG. A Phosphoserine modification is found at Ser-121. Residues 121-131 are compositionally biased toward basic residues; it reads SPQHRARKKKG. Thr-139 carries the phosphothreonine modification. At Tyr-152 the chain carries Phosphotyrosine. Phosphothreonine is present on residues Thr-154 and Thr-157.

It belongs to the RMDN family. As to quaternary structure, interacts with microtubules.

It localises to the membrane. The protein localises to the cytoplasm. It is found in the cytoskeleton. The protein resides in the spindle. Its subcellular location is the spindle pole. The protein is Regulator of microtubule dynamics protein 2 (Rmdn2) of Mus musculus (Mouse).